Here is a 543-residue protein sequence, read N- to C-terminus: Protein male-specific lethal-3 (543 aa).

In terms of domain architecture, Chromo spans 10–90; it reads LFNRGEKVLC…KLQRELAEAA (81 aa). A disordered region spans residues 93–247; it reads QKTGGYSYKD…THTTDAEKRI (155 aa). Composition is skewed to basic and acidic residues over residues 180–202, 210–224, and 234–247; these read RSRDGSGNRSRDGSGNRSRDNSS, KSKGGDKNDDGERRS, and SPKDTHTTDAEKRI. In terms of domain architecture, MRG spans 249–542; the sequence is QEDRVMLRIS…PLIDQGRELS (294 aa).

As to quaternary structure, component of the male-specific lethal (MSL) histone acetyltransferase complex, composed of mof, mle, msl-1, msl-2 and msl-3 proteins, as well as roX1 and roX2 non-coding RNAs. Post-translationally, ubiquitinated by msl-2.

Its subcellular location is the nucleus. The protein resides in the chromosome. Component of the male-specific lethal (MSL) histone acetyltransferase complex, a multiprotein complex essential for elevating transcription of the single X chromosome in the male (X chromosome dosage compensation). The MSL complex specifically associates with the single X chromosome in males and mediates formation of H4K16ac, promoting a two-fold activation of X chromosome. Acts as a histone reader that specifically recognizes and binds histone H3 trimethylated at 'Lys-36' (H3K36me3) and histone H4 monomethylated at 'Lys-20' (H4K20me1). Within the MSL complex, mediates the spreading of the MSL complex from initiation sites on the male X chromosome to flanking chromatin. Following initial recruitment of the MSL complex to male X chromosome by msl-2, msl-3 binds H3K36me3 and promotes spreading of the MSL complex in cis. In addition to its role in dosage compensation in males, promotes germline stem cell differentiation in females: recognizes and binds H3K36me3, promoting recruitment of the ATAC complex and transcription of genes, such as RpS19b. This Drosophila virilis (Fruit fly) protein is Protein male-specific lethal-3 (msl-3).